Reading from the N-terminus, the 302-residue chain is tRNA-cytidine(32) 2-sulfurtransferase (302 aa).

The PP-loop motif motif lies at 45 to 50 (SGGKDS). Residues cysteine 120, cysteine 123, and cysteine 211 each contribute to the [4Fe-4S] cluster site.

This sequence belongs to the TtcA family. In terms of assembly, homodimer. It depends on Mg(2+) as a cofactor. [4Fe-4S] cluster is required as a cofactor.

It localises to the cytoplasm. The catalysed reaction is cytidine(32) in tRNA + S-sulfanyl-L-cysteinyl-[cysteine desulfurase] + AH2 + ATP = 2-thiocytidine(32) in tRNA + L-cysteinyl-[cysteine desulfurase] + A + AMP + diphosphate + H(+). Its pathway is tRNA modification. Its function is as follows. Catalyzes the ATP-dependent 2-thiolation of cytidine in position 32 of tRNA, to form 2-thiocytidine (s(2)C32). The sulfur atoms are provided by the cysteine/cysteine desulfurase (IscS) system. This chain is tRNA-cytidine(32) 2-sulfurtransferase, found in Cellvibrio japonicus (strain Ueda107) (Pseudomonas fluorescens subsp. cellulosa).